The sequence spans 678 residues: Protein CASP (678 aa).

The Cytoplasmic segment spans residues 1–619 (MAANVGSMSQ…LILSNKTART (619 aa)). Coiled coils occupy residues 16 to 40 (DLQQ…ESEQ), 67 to 374 (LLKS…TLKS), 427 to 454 (HLTE…TIQS), and 502 to 556 (LSII…FLQS). Phosphoserine is present on Ser-586. A helical; Anchor for type IV membrane protein transmembrane segment spans residues 620 to 640 (IGFFYTLFLHCLVFLVLYKLA). The Lumenal segment spans residues 641–678 (WSESVERDCAATCAKKFADHLHKFHESDNGAAAGDLWQ).

The protein belongs to the CASP family. Homodimer; disulfide-linked. Interacts with GOLGA5. As to expression, ubiquitously expressed.

It is found in the golgi apparatus membrane. Its function is as follows. May be involved in intra-Golgi retrograde transport. The sequence is that of Protein CASP (Cux1) from Mus musculus (Mouse).